A 339-amino-acid polypeptide reads, in one-letter code: Uroporphyrinogen decarboxylase (339 aa).

Residues 23-27 (RQAGR), Asp-72, Tyr-147, Thr-202, and His-315 each bind substrate.

This sequence belongs to the uroporphyrinogen decarboxylase family. Homodimer.

It localises to the cytoplasm. The enzyme catalyses uroporphyrinogen III + 4 H(+) = coproporphyrinogen III + 4 CO2. The protein operates within porphyrin-containing compound metabolism; protoporphyrin-IX biosynthesis; coproporphyrinogen-III from 5-aminolevulinate: step 4/4. Its function is as follows. Catalyzes the decarboxylation of four acetate groups of uroporphyrinogen-III to yield coproporphyrinogen-III. This is Uroporphyrinogen decarboxylase from Citrifermentans bemidjiense (strain ATCC BAA-1014 / DSM 16622 / JCM 12645 / Bem) (Geobacter bemidjiensis).